The sequence spans 171 residues: Dual specificity protein phosphatase OPG106 (171 aa).

The segment at 1–27 is dimerization; sequence MDKKSLYKYLLLRSTGDMHKAKSPTIM. In terms of domain architecture, Tyrosine-protein phosphatase spans 23-171; that stretch reads SPTIMTRVTN…IIEKYVIDKN (149 aa). Cysteine 110 (phosphocysteine intermediate) is an active-site residue.

The protein belongs to the protein-tyrosine phosphatase family. Non-receptor class dual specificity subfamily. Homodimer.

Its subcellular location is the virion. The protein localises to the host cytoplasm. It catalyses the reaction O-phospho-L-tyrosyl-[protein] + H2O = L-tyrosyl-[protein] + phosphate. The catalysed reaction is O-phospho-L-seryl-[protein] + H2O = L-seryl-[protein] + phosphate. Its function is as follows. Serine/tyrosine phosphatase which down-regulates cellular antiviral response by dephosphorylating activated host STAT1 and blocking interferon (IFN)-stimulated innate immune responses. Dephosphorylates the OPG144 protein. This Bos taurus (Bovine) protein is Dual specificity protein phosphatase OPG106 (OPG106).